Reading from the N-terminus, the 513-residue chain is MEKFEGYSEKQKSRQQYFVYPLLFQEYIYAFAHDYGLNGSEPVEIFGCNNKKFSSLLVKRLIIRMYQQNFWINSVNHPNQDRLLDHSNYFYSEFYSQILSEGFAIVVEIPFSLGELSCPEEKEIPKFQNLQSIHSIFPFLEDKFLHLHYLSHLEIPYPIHLEILVQLLEYRIQDVPSLHLLRFFLNYYSNWNSLIISMKSIFLLKKENKRLFRFLYNSYVSEYEFFLLFLRKQSSCLRLTSSGTFLERIIFSRKMEHFGVMYPGFFRKTIWFFMDPLMHYVRYQGKAILASKGTLLLKKKWKSYLVNFSQYFFSFWTQPQRIRLNQLTNSCFDFLGYLSSVPINTLLVRNQMLENSFLIDTRMKKFDTTVPATPLIGSLSKAQFCTGSGHPISKPVWTDLSDWDILDRFGRICRNLFHYHSGSSKKRTLYRLKYILRLSCARTLARKHKSTVRTFMQRLGSVFLEEFFTEEEQVFSLMFTKTTHFSFHGSHSERIWYLDIIRINDLVNPLTLN.

This sequence belongs to the intron maturase 2 family. MatK subfamily.

Its subcellular location is the plastid. It localises to the chloroplast. In terms of biological role, usually encoded in the trnK tRNA gene intron. Probably assists in splicing its own and other chloroplast group II introns. In Molinia caerulea (Purple moor-grass), this protein is Maturase K.